Consider the following 252-residue polypeptide: MAVYGIVATVLVLLLLGDASDVEATGRIIGGSDQLIRNAPWQVSIQISARHECGGVIYSKEIIITAGHCLHERSVTLMKVRVGAQNHNYGGTLVPVAAYKVHEQFDSRFLHYDIAVLRLSTPLTFGLSTRAINLASTSPSGGTTVTVTGWGHTDNGALSDSLQKAQLQIIDRGECASQKFGYGADFVGEETICAASTDADACTGDSGGPLVASSQLVGIVSWGYRCADDNYPGVYADVAILRPWIVKAANAI.

The first 19 residues, 1–19 (MAVYGIVATVLVLLLLGDA), serve as a signal peptide directing secretion. A propeptide spans 20 to 27 (SDVEATGR) (activation peptide). The 223-residue stretch at 28–250 (IIGGSDQLIR…LRPWIVKAAN (223 aa)) folds into the Peptidase S1 domain. Cysteine 53 and cysteine 69 are disulfide-bonded. Catalysis depends on charge relay system residues histidine 68 and aspartate 113. Intrachain disulfides connect cysteine 175–cysteine 193 and cysteine 202–cysteine 226. The active-site Charge relay system is serine 206.

Belongs to the peptidase S1 family.

The protein resides in the secreted. Its subcellular location is the extracellular space. It catalyses the reaction Preferential cleavage: Arg-|-Xaa, Lys-|-Xaa.. The sequence is that of Trypsin iota (iotaTry) from Drosophila melanogaster (Fruit fly).